A 378-amino-acid chain; its full sequence is uncharacterized protein (378 aa).

Helical transmembrane passes span 7–29, 33–55, 68–85, 90–108, 115–137, 152–174, 204–225, 245–267, 280–302, and 347–366; these read VTPF…RLSQ, LFFV…YQII, VSYL…EFYT, SGSL…HLLL, PLTV…FLYL, LTVG…MLIM, NYKL…FLYL, IFLF…ASHA, LILY…PRIV, and FSPL…ALFL.

It is found in the cell membrane. This is an uncharacterized protein from Aquifex aeolicus (strain VF5).